The chain runs to 364 residues: SH3 and cysteine-rich domain-containing protein 3 (364 aa).

Disordered stretches follow at residues 1–89 (MTEK…NDKP) and 189–244 (NKER…HKQP). Positions 64 to 78 (YEEEEEEEEEEEEPP) are enriched in acidic residues. The Phorbol-ester/DAG-type zinc finger occupies 89–140 (PHKFKDHFFKKPKFCDVCARMIVLNNKFGLRCKNCKTNIHEHCQSYVEMQRC). Over residues 212–242 (ESARPEEGKPQDGNPEGDKKAEKKTPDDKHK) the composition is skewed to basic and acidic residues. SH3 domains are found at residues 247-306 (QQSH…RVRA) and 307-364 (GERV…LEEI).

In terms of assembly, interacts (via SH3 domains) with the calcium channels CACNA1S and CACNA1C. Component of a calcium channel complex with CACNA1S and CACNB1. Component of a calcium channel complex with CACNA1C and CACNB1.

It is found in the cytoplasm. The protein resides in the cell membrane. It localises to the sarcolemma. Its subcellular location is the T-tubule. In terms of biological role, required for normal excitation-contraction coupling in skeletal muscle and for normal muscle contraction in response to membrane depolarization. Required for normal Ca(2+) release from the sarcplasmic reticulum, which ultimately leads to muscle contraction. Probably functions via its effects on muscle calcium channels. Increases CACNA1S channel activity, in addition to its role in enhancing the expression of CACNA1S at the cell membrane. Has a redundant role in promoting the expression of the calcium channel CACNA1S at the cell membrane. Slows down the inactivation rate of the calcium channel CACNA1C. The sequence is that of SH3 and cysteine-rich domain-containing protein 3 (STAC3) from Homo sapiens (Human).